Here is a 1017-residue protein sequence, read N- to C-terminus: Probable beta-galactosidase B (1017 aa).

The signal sequence occupies residues 1-20; it reads MTRITKLCVLLLSSIGLLAA. Asparagine 23 is a glycosylation site (N-linked (GlcNAc...) asparagine). Residue tyrosine 90 coordinates substrate. Asparagine 100 is a glycosylation site (N-linked (GlcNAc...) asparagine). Substrate-binding residues include asparagine 135, alanine 136, and glutamate 137. An N-linked (GlcNAc...) asparagine glycan is attached at asparagine 158. A substrate-binding site is contributed by asparagine 195. The active-site Proton donor is glutamate 196. Residue asparagine 211 is glycosylated (N-linked (GlcNAc...) asparagine). Position 265 (tyrosine 265) interacts with substrate. A disulfide bridge connects residues cysteine 271 and cysteine 324. The Nucleophile role is filled by glutamate 308. Position 373 (tyrosine 373) interacts with substrate. N-linked (GlcNAc...) asparagine glycans are attached at residues asparagine 411, asparagine 417, asparagine 456, asparagine 628, asparagine 681, asparagine 737, asparagine 770, asparagine 777, asparagine 785, asparagine 828, and asparagine 829.

This sequence belongs to the glycosyl hydrolase 35 family.

It localises to the secreted. It catalyses the reaction Hydrolysis of terminal non-reducing beta-D-galactose residues in beta-D-galactosides.. Functionally, cleaves beta-linked terminal galactosyl residues from gangliosides, glycoproteins, and glycosaminoglycans. In Aspergillus niger (strain ATCC MYA-4892 / CBS 513.88 / FGSC A1513), this protein is Probable beta-galactosidase B (lacB).